A 388-amino-acid chain; its full sequence is Succinate--CoA ligase [ADP-forming] subunit beta (388 aa).

In terms of domain architecture, ATP-grasp spans 9 to 244 (KEILRKYNVP…LDEEDPAEIE (236 aa)). Residues K46, 53–55 (GRG), E99, A102, and E107 each bind ATP. The Mg(2+) site is built by N199 and D213. Residues N264 and 321–323 (GIM) contribute to the substrate site.

Belongs to the succinate/malate CoA ligase beta subunit family. Heterotetramer of two alpha and two beta subunits. The cofactor is Mg(2+).

It catalyses the reaction succinate + ATP + CoA = succinyl-CoA + ADP + phosphate. The enzyme catalyses GTP + succinate + CoA = succinyl-CoA + GDP + phosphate. Its pathway is carbohydrate metabolism; tricarboxylic acid cycle; succinate from succinyl-CoA (ligase route): step 1/1. Functionally, succinyl-CoA synthetase functions in the citric acid cycle (TCA), coupling the hydrolysis of succinyl-CoA to the synthesis of either ATP or GTP and thus represents the only step of substrate-level phosphorylation in the TCA. The beta subunit provides nucleotide specificity of the enzyme and binds the substrate succinate, while the binding sites for coenzyme A and phosphate are found in the alpha subunit. The polypeptide is Succinate--CoA ligase [ADP-forming] subunit beta (Ralstonia pickettii (strain 12J)).